Reading from the N-terminus, the 296-residue chain is ATP synthase gamma chain (296 aa).

Belongs to the ATPase gamma chain family. As to quaternary structure, F-type ATPases have 2 components, CF(1) - the catalytic core - and CF(0) - the membrane proton channel. CF(1) has five subunits: alpha(3), beta(3), gamma(1), delta(1), epsilon(1). CF(0) has three main subunits: a, b and c.

It is found in the cell inner membrane. Functionally, produces ATP from ADP in the presence of a proton gradient across the membrane. The gamma chain is believed to be important in regulating ATPase activity and the flow of protons through the CF(0) complex. The sequence is that of ATP synthase gamma chain from Rhodopirellula baltica (strain DSM 10527 / NCIMB 13988 / SH1).